The primary structure comprises 339 residues: Serpentine receptor class alpha-24 (339 aa).

7 helical membrane passes run 26–46, 65–82, 112–132, 151–171, 199–219, 248–268, and 284–304; these read ITVK…YYFA, LILL…TTML, ELFV…SLAF, VSIF…YVGL, FRTL…YLSV, VCIL…GVNY, and LAPF…VIHC.

Belongs to the nematode receptor-like protein sra family.

Its subcellular location is the membrane. In Caenorhabditis elegans, this protein is Serpentine receptor class alpha-24 (sra-24).